The primary structure comprises 626 residues: Mini-chromosome maintenance complex-binding protein (626 aa).

2 disordered regions span residues 152–216 (STSY…LDLN) and 265–287 (PSSL…AHDP). Residues 177-196 (KQREPHTEPHGNGDSKRQET) show a composition bias toward basic and acidic residues. Residues 197 to 210 (EAPSSQTTAPSDCS) show a composition bias toward polar residues.

The protein belongs to the MCMBP family. Interacts with the mcm complex: associates with the mcm3-7 complex which lacks mcm2, while it does not interact with the mcm complex when mcm2 is present (mcm2-7 complex).

Its subcellular location is the nucleus. Functionally, associated component of the mcm complex that acts as a regulator of DNA replication. Binds to the MCM complex during late S phase and promotes the disassembly of the mcm complex from chromatin, thereby acting as a key regulator of pre-replication complex (pre-RC) unloading from replicated DNA. Can dissociate the mcm complex without addition of ATP; probably acts by destabilizing interactions of each individual subunits of the mcm complex. Required for sister chromatid cohesion. This is Mini-chromosome maintenance complex-binding protein (mcmbp) from Salmo salar (Atlantic salmon).